Reading from the N-terminus, the 393-residue chain is Chorismate synthase (393 aa).

Positions 40 and 46 each coordinate NADP(+). FMN-binding positions include 129–131 (RSS), 249–250 (QA), Gly301, 316–320 (KPIPT), and Arg342.

The protein belongs to the chorismate synthase family. In terms of assembly, homotetramer. FMNH2 serves as cofactor.

The catalysed reaction is 5-O-(1-carboxyvinyl)-3-phosphoshikimate = chorismate + phosphate. It functions in the pathway metabolic intermediate biosynthesis; chorismate biosynthesis; chorismate from D-erythrose 4-phosphate and phosphoenolpyruvate: step 7/7. Functionally, catalyzes the anti-1,4-elimination of the C-3 phosphate and the C-6 proR hydrogen from 5-enolpyruvylshikimate-3-phosphate (EPSP) to yield chorismate, which is the branch point compound that serves as the starting substrate for the three terminal pathways of aromatic amino acid biosynthesis. This reaction introduces a second double bond into the aromatic ring system. The protein is Chorismate synthase of Geobacter metallireducens (strain ATCC 53774 / DSM 7210 / GS-15).